Consider the following 86-residue polypeptide: Large ribosomal subunit protein bL31B (86 aa).

This sequence belongs to the bacterial ribosomal protein bL31 family. Type B subfamily. In terms of assembly, part of the 50S ribosomal subunit.

The polypeptide is Large ribosomal subunit protein bL31B (Cupriavidus metallidurans (strain ATCC 43123 / DSM 2839 / NBRC 102507 / CH34) (Ralstonia metallidurans)).